Reading from the N-terminus, the 288-residue chain is Elongation factor Ts (288 aa).

Residues 82–85 (TDFV) form an involved in Mg(2+) ion dislocation from EF-Tu region.

Belongs to the EF-Ts family.

It is found in the cytoplasm. Associates with the EF-Tu.GDP complex and induces the exchange of GDP to GTP. It remains bound to the aminoacyl-tRNA.EF-Tu.GTP complex up to the GTP hydrolysis stage on the ribosome. The polypeptide is Elongation factor Ts (Pelodictyon phaeoclathratiforme (strain DSM 5477 / BU-1)).